Consider the following 279-residue polypeptide: Bifunctional protein FolD 1 (279 aa).

Residues 166-168 (GRS) and Ser191 contribute to the NADP(+) site.

Belongs to the tetrahydrofolate dehydrogenase/cyclohydrolase family. Homodimer.

The enzyme catalyses (6R)-5,10-methylene-5,6,7,8-tetrahydrofolate + NADP(+) = (6R)-5,10-methenyltetrahydrofolate + NADPH. It catalyses the reaction (6R)-5,10-methenyltetrahydrofolate + H2O = (6R)-10-formyltetrahydrofolate + H(+). It functions in the pathway one-carbon metabolism; tetrahydrofolate interconversion. Its function is as follows. Catalyzes the oxidation of 5,10-methylenetetrahydrofolate to 5,10-methenyltetrahydrofolate and then the hydrolysis of 5,10-methenyltetrahydrofolate to 10-formyltetrahydrofolate. The protein is Bifunctional protein FolD 1 of Salinispora arenicola (strain CNS-205).